A 701-amino-acid chain; its full sequence is Elongation factor G (701 aa).

The tr-type G domain maps to 11 to 287 (TKVRNIGIMA…AVIDYLPSPL (277 aa)). GTP-binding positions include 20–27 (AHIDAGKT), 84–88 (DTPGH), and 138–141 (NKMD).

Belongs to the TRAFAC class translation factor GTPase superfamily. Classic translation factor GTPase family. EF-G/EF-2 subfamily.

The protein resides in the cytoplasm. Functionally, catalyzes the GTP-dependent ribosomal translocation step during translation elongation. During this step, the ribosome changes from the pre-translocational (PRE) to the post-translocational (POST) state as the newly formed A-site-bound peptidyl-tRNA and P-site-bound deacylated tRNA move to the P and E sites, respectively. Catalyzes the coordinated movement of the two tRNA molecules, the mRNA and conformational changes in the ribosome. The chain is Elongation factor G from Mycobacterium ulcerans (strain Agy99).